The chain runs to 94 residues: Co-chaperonin GroES (94 aa).

The protein belongs to the GroES chaperonin family. As to quaternary structure, heptamer of 7 subunits arranged in a ring. Interacts with the chaperonin GroEL.

Its subcellular location is the cytoplasm. Functionally, together with the chaperonin GroEL, plays an essential role in assisting protein folding. The GroEL-GroES system forms a nano-cage that allows encapsulation of the non-native substrate proteins and provides a physical environment optimized to promote and accelerate protein folding. GroES binds to the apical surface of the GroEL ring, thereby capping the opening of the GroEL channel. This is Co-chaperonin GroES from Streptococcus oralis.